We begin with the raw amino-acid sequence, 193 residues long: Ion-translocating oxidoreductase complex subunit A (193 aa).

6 consecutive transmembrane segments (helical) span residues 5–25 (LLLF…FLGL), 39–59 (IGMG…AWMV), 62–82 (FILL…LVIA), 102–122 (LLGI…VALL), 134–154 (AVYG…FAAI), and 171–191 (SIAL…TGLV).

The protein belongs to the NqrDE/RnfAE family. The complex is composed of six subunits: RnfA, RnfB, RnfC, RnfD, RnfE and RnfG.

The protein resides in the cell inner membrane. Functionally, part of a membrane-bound complex that couples electron transfer with translocation of ions across the membrane. The polypeptide is Ion-translocating oxidoreductase complex subunit A (Yersinia pestis (strain Pestoides F)).